Here is a 194-residue protein sequence, read N- to C-terminus: MRTATITRTTKETTITISLNLDQQSGIQIATGIGFFDHMLDAFAKHGRFGLTVDAQGDLDVDPHHTIEDTGIVLGECFKQALGDKAGIERFRSAFVPMDESLARAVVDLSGRAYLVFDAELTNQRLGGFDTEVTEDFFQAVAFAGEFNLHASVLYGRNTHHKIEALFKALGRSLRAAVAINPEVQGIPSTKGVI.

Belongs to the imidazoleglycerol-phosphate dehydratase family.

The protein resides in the cytoplasm. It catalyses the reaction D-erythro-1-(imidazol-4-yl)glycerol 3-phosphate = 3-(imidazol-4-yl)-2-oxopropyl phosphate + H2O. It functions in the pathway amino-acid biosynthesis; L-histidine biosynthesis; L-histidine from 5-phospho-alpha-D-ribose 1-diphosphate: step 6/9. The protein is Imidazoleglycerol-phosphate dehydratase of Lacticaseibacillus paracasei (strain ATCC 334 / BCRC 17002 / CCUG 31169 / CIP 107868 / KCTC 3260 / NRRL B-441) (Lactobacillus paracasei).